Here is a 60-residue protein sequence, read N- to C-terminus: Metallothionein A (60 aa).

The beta stretch occupies residues 1 to 28 (MDPCDCSKSGTCNCGGSCTCTNCSCKSC). A divalent metal cation-binding residues include cysteine 4, cysteine 6, cysteine 12, cysteine 14, cysteine 18, cysteine 20, cysteine 23, cysteine 25, cysteine 28, cysteine 32, cysteine 33, cysteine 35, cysteine 36, cysteine 40, cysteine 43, cysteine 47, cysteine 49, cysteine 54, cysteine 58, and cysteine 59. The interval 29-60 (KKSCCPCCPSGCTKCASGCVCKGKTCDTSCCQ) is alpha.

Belongs to the metallothionein superfamily. Type 1 family.

Metallothioneins have a high content of cysteine residues that bind various heavy metals. This is Metallothionein A (mta) from Chionodraco hamatus (Antarctic teleost icefish).